Reading from the N-terminus, the 79-residue chain is Defensin-like protein 117 (79 aa).

An N-terminal signal peptide occupies residues 1 to 24 (MTTTKTMLVAFVLTLFFVISSVHC). Intrachain disulfides connect Cys-40/Cys-75, Cys-46/Cys-68, Cys-53/Cys-73, and Cys-57/Cys-74.

The protein belongs to the DEFL family.

The protein localises to the secreted. The protein is Defensin-like protein 117 of Arabidopsis thaliana (Mouse-ear cress).